The primary structure comprises 331 residues: Germ cell-specific gene 1-like protein (331 aa).

Residues 1-8 (MKTSRRGR) lie on the Cytoplasmic side of the membrane. A helical transmembrane segment spans residues 9–29 (ALLAVALNLLALLFATTAFLT). Residues 30–132 (THWCQGTQRV…FIDLAPASEK (103 aa)) are Extracellular-facing. Residues 133–153 (GVLWLSVVSEVLYILLLVVGF) form a helical membrane-spanning segment. Residues 154–173 (SLMCLELFHSSNVIDGLKLN) lie on the Cytoplasmic side of the membrane. Residues 174 to 194 (AFAAVFTVLSGLLGMVAHMMY) traverse the membrane as a helical segment. Topologically, residues 195–217 (TQVFQVTVSLGPEDWRPHSWDYG) are extracellular. Residues 218 to 238 (WSFCLAWGSFTCCMAASVTTL) form a helical membrane-spanning segment. Residues 239–331 (NSYTKTVIEF…RQCWVLGHWV (93 aa)) lie on the Cytoplasmic side of the membrane.

This sequence belongs to the GSG1 family. In terms of assembly, component of the inner core of AMPAR complex. AMPAR complex consists of an inner core made of 4 pore-forming GluA/GRIA proteins (GRIA1, GRIA2, GRIA3 and GRIA4) and 4 major auxiliary subunits arranged in a twofold symmetry. One of the two pairs of distinct binding sites is occupied either by CNIH2, CNIH3 or CACNG2, CACNG3. The other harbors CACNG2, CACNG3, CACNG4, CACNG8 or GSG1L. This inner core of AMPAR complex is complemented by outer core constituents binding directly to the GluA/GRIA proteins at sites distinct from the interaction sites of the inner core constituents. Outer core constituents include at least PRRT1, PRRT2, CKAMP44/SHISA9, FRRS1L and NRN1. The proteins of the inner and outer core serve as a platform for other, more peripherally associated AMPAR constituents. Alone or in combination, these auxiliary subunits control the gating and pharmacology of the AMPAR complex and profoundly impact their biogenesis and protein processing.

It localises to the cell membrane. The protein resides in the synapse. As a component of the inner core of AMPAR complex, modifies AMPA receptor (AMPAR) gating. The chain is Germ cell-specific gene 1-like protein (GSG1L) from Homo sapiens (Human).